A 108-amino-acid polypeptide reads, in one-letter code: Movement protein TGB2 (108 aa).

The Cytoplasmic portion of the chain corresponds to 1-8 (MPLTPPPN). A helical membrane pass occupies residues 9 to 29 (YTGLYIAAALGVSLAAVVALF). The Lumenal segment spans residues 30 to 72 (TRSTLPIVGDSQHNLPHGGRYRDGTKAIDYFKPTKLNSVEPGN). The chain crosses the membrane as a helical span at residues 73–93 (YWYTQPWLLVILLVALICLSG). Over 94–108 (RHAQCCPRCNRVHSA) the chain is Cytoplasmic.

The protein belongs to the Tymovirales TGBp2 protein family.

It is found in the host endoplasmic reticulum membrane. Plays a role in viral cell-to-cell propagation, by facilitating genome transport to neighboring plant cells through plasmosdesmata,. In Solanum tuberosum (Potato), this protein is Movement protein TGB2.